The primary structure comprises 239 residues: Ribulose-1,5-bisphosphate 5-phosphatase (239 aa).

The active-site Nucleophile is D8. D8, D10, and D184 together coordinate Mg(2+). The Proton donor role is filled by D10. Positions 205 to 239 are disordered; it reads PSEESDATESADRAATERQADHSIDTLGELTDLVS. Residues 214 to 228 are compositionally biased toward basic and acidic residues; it reads SADRAATERQADHSI.

It belongs to the HAD-like hydrolase superfamily. Mg(2+) is required as a cofactor. It depends on Mn(2+) as a cofactor. Requires Co(2+) as cofactor. The cofactor is Ni(2+).

The catalysed reaction is D-ribulose 1,5-bisphosphate + H2O = D-ribulose 1-phosphate + phosphate. With respect to regulation, requires both monovalent and divalent ions for optimal activity. Optimal KCl concentration is higher than 2.5 M. Functionally, phosphatase involved in the non-carboxylating pentose bisphosphate pathway, a nucleoside degradation pathway present in some halophilic archaea. Catalyzes the dephosphorylation of ribulose 1,5-bisphosphate (RuBP) to ribulose 1-phosphate (Ru1P). Shows a strict substrate specificity toward RuBP. The polypeptide is Ribulose-1,5-bisphosphate 5-phosphatase (Halopiger xanaduensis (strain DSM 18323 / JCM 14033 / SH-6)).